A 137-amino-acid chain; its full sequence is Transcription antitermination protein NusB (137 aa).

Belongs to the NusB family.

In terms of biological role, involved in transcription antitermination. Required for transcription of ribosomal RNA (rRNA) genes. Binds specifically to the boxA antiterminator sequence of the ribosomal RNA (rrn) operons. This Proteus mirabilis (strain HI4320) protein is Transcription antitermination protein NusB.